A 139-amino-acid polypeptide reads, in one-letter code: MSYCRQEGKDKIIFVTKEDHETPSSAELIADDPNDPYEDQGLILPNGDINWNCPCLGGMASGPCGEQFKSAFSCFHYSQEEIKGSDCLDQFRGMQECMQKYPDLYPQEDDEEEAEKEKQNKEAEPSVTQSSDTKEESSS.

Disulfide bonds link Cys53–Cys55, Cys64–Cys97, and Cys74–Cys87. One can recognise a CHCH domain in the interval 61-105 (SGPCGEQFKSAFSCFHYSQEEIKGSDCLDQFRGMQECMQKYPDLY). Short sequence motifs (cx9C motif) lie at residues 64–74 (CGEQFKSAFSC) and 87–97 (CLDQFRGMQEC). The tract at residues 103–139 (DLYPQEDDEEEAEKEKQNKEAEPSVTQSSDTKEESSS) is disordered. Basic and acidic residues predominate over residues 115–124 (EKEKQNKEAE).

In terms of assembly, monomer. Can form homooligomers.

The protein resides in the mitochondrion intermembrane space. In terms of biological role, central component of a redox-sensitive mitochondrial intermembrane space import machinery which is required for the biogenesis of respiratory chain complexes. Functions as chaperone and catalyzes the formation of disulfide bonds in substrate proteins, such as COX17 or MICU1. Required for the import and folding of small cysteine-containing proteins (small Tim) in the mitochondrial intermembrane space (IMS). Precursor proteins to be imported into the IMS are translocated in their reduced form into the mitochondria. The sequence is that of Mitochondrial intermembrane space import and assembly protein 40-A (chchd4-a) from Xenopus laevis (African clawed frog).